Here is a 243-residue protein sequence, read N- to C-terminus: Ribonuclease PH (243 aa).

Phosphate-binding positions include Arg-84 and 122 to 124; that span reads GTR.

The protein belongs to the RNase PH family. Homohexameric ring arranged as a trimer of dimers.

It carries out the reaction tRNA(n+1) + phosphate = tRNA(n) + a ribonucleoside 5'-diphosphate. In terms of biological role, phosphorolytic 3'-5' exoribonuclease that plays an important role in tRNA 3'-end maturation. Removes nucleotide residues following the 3'-CCA terminus of tRNAs; can also add nucleotides to the ends of RNA molecules by using nucleoside diphosphates as substrates, but this may not be physiologically important. Probably plays a role in initiation of 16S rRNA degradation (leading to ribosome degradation) during starvation. This Bdellovibrio bacteriovorus (strain ATCC 15356 / DSM 50701 / NCIMB 9529 / HD100) protein is Ribonuclease PH.